A 341-amino-acid polypeptide reads, in one-letter code: Acetylpolyamine amidohydrolase (341 aa).

The active-site Proton donor/acceptor is the His157. Asp192, His194, and Asp281 together coordinate Zn(2+).

Belongs to the histone deacetylase family. In terms of assembly, homodimer. Zn(2+) serves as cofactor.

The enzyme catalyses N-acetylputrescine + H2O = putrescine + acetate. The catalysed reaction is N-acetylcadaverine + H2O = cadaverine + acetate. The protein operates within amine and polyamine metabolism. Functionally, involved in polyamine metabolism. Catalyzes the deacetylation of various acetylated polyamines such as N-acetylputrescine and N-acetylcadaverine. This is Acetylpolyamine amidohydrolase from Burkholderia pseudomallei (strain 1710b).